The sequence spans 312 residues: uncharacterized protein (312 aa).

An N-terminal signal peptide occupies residues 1-19 (MFSKYLVTASSLFVALTSA).

This is an uncharacterized protein from Saccharomyces cerevisiae (strain ATCC 204508 / S288c) (Baker's yeast).